We begin with the raw amino-acid sequence, 79 residues long: Major outer membrane lipoprotein Lpp 2 (79 aa).

The N-terminal stretch at M1–G21 is a signal peptide. C22 is lipidated: N-palmitoyl cysteine. C22 is lipidated: S-diacylglycerol cysteine. 2 repeats span residues N25–V35 and S39–V49. The stretch at I28–R69 forms a coiled coil. N6-murein peptidoglycan lysine is present on K79.

Belongs to the Lpp family. As to quaternary structure, homotrimer.

It is found in the cell outer membrane. The protein resides in the secreted. It localises to the cell wall. Its function is as follows. A highly abundant outer membrane lipoprotein that controls the distance between the inner and outer membranes. The only protein known to be covalently linked to the peptidoglycan network (PGN). Also non-covalently binds the PGN. The link between the cell outer membrane and PGN contributes to maintenance of the structural and functional integrity of the cell envelope, and maintains the correct distance between the PGN and the outer membrane. The sequence is that of Major outer membrane lipoprotein Lpp 2 from Salmonella typhi.